We begin with the raw amino-acid sequence, 639 residues long: RNA polymerase II elongation factor ELL2 (639 aa).

Disordered regions lie at residues Asp-175–Gln-203, Leu-291–Ile-326, Pro-378–Gln-416, and Pro-439–Thr-513. The segment covering Leu-291–Gln-317 has biased composition (polar residues). Residues Pro-378–Pro-401 show a composition bias toward low complexity. Over residues Ser-457–Lys-469 the composition is skewed to basic residues. The span at Glu-470–Ile-479 shows a compositional bias: basic and acidic residues. A compositionally biased stretch (acidic residues) spans Glu-480 to Gln-490. Residues Ser-501 and Ser-579 each carry the phosphoserine modification. The region spanning Pro-525–Ala-635 is the OCEL domain.

This sequence belongs to the ELL/occludin family. Component of the super elongation complex (SEC), at least composed of EAF1, EAF2, CDK9, MLLT3/AF9, AFF (AFF1 or AFF4), the P-TEFb complex and ELL (ELL, ELL2 or ELL3). Component of the little elongation complex (LEC), at least composed of ELL (ELL, ELL2 or ELL3), ZC3H8, ICE1 and ICE2. Interacts with AFF4; the interaction is direct and leads to stabilize ELL2 and prevent ELL2 ubiquitination. Interacts with EAF1 and EAF2. Ubiquitinated by SIAH1, leading to its degradation by the proteasome. Interaction with AFF4 stabilizes ELL2 and prevents ELL2 ubiquitination.

Its subcellular location is the nucleus. Functionally, elongation factor component of the super elongation complex (SEC), a complex required to increase the catalytic rate of RNA polymerase II transcription by suppressing transient pausing by the polymerase at multiple sites along the DNA. Component of the little elongation complex (LEC), a complex required to regulate small nuclear RNA (snRNA) gene transcription by RNA polymerase II and III. Plays a role in immunoglobulin secretion in plasma cells: directs efficient alternative mRNA processing, influencing both proximal poly(A) site choice and exon skipping, as well as immunoglobulin heavy chain (IgH) alternative processing. Probably acts by regulating histone modifications accompanying transition from membrane-specific to secretory IgH mRNA expression. This is RNA polymerase II elongation factor ELL2 (Ell2) from Mus musculus (Mouse).